The primary structure comprises 328 residues: Sin3 histone deacetylase corepressor complex component SDS3 (328 aa).

A compositionally biased stretch (low complexity) spans 1–22 (MSAAGLLAPAPAPAAAPAAPEY). Positions 1–69 (MSAAGLLAPA…HDEEDYVEMK (69 aa)) are disordered. At Ser2 the chain carries N-acetylserine. The segment at 2 to 170 (SAAGLLAPAP…IENEKLTMEL (169 aa)) is mediates interaction with USP17L2. Composition is skewed to acidic residues over residues 23 to 37 (YPEDEEELESAEDDE) and 45 to 54 (SDEDTEDASE). Residues Ser32 and Ser45 each carry the phosphoserine modification. Phosphothreonine is present on Thr49. Residue Ser53 is modified to Phosphoserine. The span at 56-69 (DLAKHDEEDYVEMK) shows a compositional bias: basic and acidic residues. Positions 66-171 (VEMKEQMYQD…ENEKLTMELT (106 aa)) form a coiled coil. Residues Lys69, Lys178, and Lys201 each participate in a glycyl lysine isopeptide (Lys-Gly) (interchain with G-Cter in SUMO2) cross-link. The tract at residues 188-226 (RPNDPVPIPDKRRKPAPAQLNYLLTDEQIMEDLRTLNKL) is sin3 interaction domain (SID). Residues 226-252 (LKSPKRPASPSSPEHLPATPAESPAQR) are disordered. 3 positions are modified to phosphoserine: Ser228, Ser234, and Ser237. Phosphothreonine is present on Thr244.

Belongs to the SDS3 family. In terms of assembly, interacts with HCFC1. Homodimer. Component of the SIN3 histone deacetylase (HDAC) corepressor complex. Interacts with SIN3A. Interaction with SIN3B enhances the interaction between SIN3B and HDAC1 to form a complex. Component of a mSin3A corepressor complex that contains SIN3A, SAP130, SUDS3/SAP45, ARID4B/SAP180, HDAC1 and HDAC2. Interacts with USP17L2; the interaction is direct. Interacts with FOXK2. Polyubiquitinated. 'Lys-63'-polyubiquitinated SUDS3 positively regulates histone deacetylation. Regulated through deubiquitination by USP17L2/USP17 that cleaves 'Lys-63'-linked ubiquitin chains. As to expression, expressed in all newborn tissues tested, including brain, kidney and liver.

Its subcellular location is the nucleus. Its function is as follows. Regulatory protein which represses transcription and augments histone deacetylase activity of HDAC1. May have a potential role in tumor suppressor pathways through regulation of apoptosis. May function in the assembly and/or enzymatic activity of the mSin3A corepressor complex or in mediating interactions between the complex and other regulatory complexes. This Mus musculus (Mouse) protein is Sin3 histone deacetylase corepressor complex component SDS3 (Suds3).